The sequence spans 310 residues: GMP synthase [glutamine-hydrolyzing] subunit B (310 aa).

Positions 2–185 constitute a GMPS ATP-PPase domain; that stretch reads FDPKKFIDEA…LGLPDSIVYR (184 aa). An ATP-binding site is contributed by 29–35; it reads SGGVDSS.

Heterodimer composed of a glutamine amidotransferase subunit (A) and a GMP-binding subunit (B).

It catalyses the reaction XMP + L-glutamine + ATP + H2O = GMP + L-glutamate + AMP + diphosphate + 2 H(+). It functions in the pathway purine metabolism; GMP biosynthesis; GMP from XMP (L-Gln route): step 1/1. In terms of biological role, catalyzes the synthesis of GMP from XMP. The chain is GMP synthase [glutamine-hydrolyzing] subunit B (guaAB) from Methanocaldococcus jannaschii (strain ATCC 43067 / DSM 2661 / JAL-1 / JCM 10045 / NBRC 100440) (Methanococcus jannaschii).